The primary structure comprises 376 residues: Acetylornithine aminotransferase (376 aa).

Pyridoxal 5'-phosphate-binding positions include 96–97 and F128; that span reads GT. R131 contributes to the N(2)-acetyl-L-ornithine binding site. Pyridoxal 5'-phosphate is bound at residue 213 to 216; the sequence is DEVQ. K242 is subject to N6-(pyridoxal phosphate)lysine. Residue S270 participates in N(2)-acetyl-L-ornithine binding. T271 contacts pyridoxal 5'-phosphate.

It belongs to the class-III pyridoxal-phosphate-dependent aminotransferase family. ArgD subfamily. In terms of assembly, homodimer. Pyridoxal 5'-phosphate serves as cofactor.

The protein localises to the cytoplasm. The catalysed reaction is N(2)-acetyl-L-ornithine + 2-oxoglutarate = N-acetyl-L-glutamate 5-semialdehyde + L-glutamate. It functions in the pathway amino-acid biosynthesis; L-arginine biosynthesis; N(2)-acetyl-L-ornithine from L-glutamate: step 4/4. This chain is Acetylornithine aminotransferase, found in Aquifex aeolicus (strain VF5).